The following is a 370-amino-acid chain: Cell division protein DivIB (370 aa).

The tract at residues 1 to 65 (MKKKKDEELT…SNKKGTKRIV (65 aa)) is disordered. Over 1 to 74 (MKKKKDEELT…VKEQRLSRQK (74 aa)) the chain is Cytoplasmic. Composition is skewed to basic residues over residues 25-34 (SRFKRKRKAT) and 47-63 (RNNRNKVKKSNKKGTKR). The helical transmembrane segment at 75-95 (LGILIGSTLIVIALFFGYFYS) threads the bilayer. At 96–370 (SISRVQKFSV…STVNTQQDID (275 aa)) the chain is on the extracellular side. One can recognise a POTRA domain in the interval 98 to 169 (SRVQKFSVSG…GKVKIKVKEN (72 aa)). The disordered stretch occupies residues 295-370 (SGWTDEAKAA…STVNTQQDID (76 aa)). 2 stretches are compositionally biased toward low complexity: residues 304 to 314 (ASESSKSAESS) and 327 to 342 (SESADSTSASADSTET). The segment covering 356 to 370 (SSNAESTVNTQQDID) has biased composition (polar residues).

It belongs to the FtsQ/DivIB family. DivIB subfamily.

It is found in the cell membrane. In terms of biological role, cell division protein that may be involved in stabilizing or promoting the assembly of the division complex. This Pediococcus pentosaceus (strain ATCC 25745 / CCUG 21536 / LMG 10740 / 183-1w) protein is Cell division protein DivIB.